The primary structure comprises 250 residues: Probable transcriptional regulatory protein Cphamn1_0542 (250 aa).

The protein belongs to the TACO1 family.

It is found in the cytoplasm. In Chlorobium phaeobacteroides (strain BS1), this protein is Probable transcriptional regulatory protein Cphamn1_0542.